A 406-amino-acid polypeptide reads, in one-letter code: S-adenosylmethionine synthase (406 aa).

141–146 (GQGSMD) provides a ligand contact to ATP.

This sequence belongs to the AdoMet synthase 2 family. In terms of assembly, homodimer. The cofactor is Mg(2+).

It catalyses the reaction L-methionine + ATP + H2O = S-adenosyl-L-methionine + phosphate + diphosphate. The protein operates within amino-acid biosynthesis; S-adenosyl-L-methionine biosynthesis; S-adenosyl-L-methionine from L-methionine: step 1/1. Its function is as follows. Catalyzes the formation of S-adenosylmethionine from methionine and ATP. The polypeptide is S-adenosylmethionine synthase (mat) (Methanocaldococcus jannaschii (strain ATCC 43067 / DSM 2661 / JAL-1 / JCM 10045 / NBRC 100440) (Methanococcus jannaschii)).